The sequence spans 456 residues: Chitobiosyldiphosphodolichol beta-mannosyltransferase (456 aa).

Residues 1-22 (MGEIIKYKGFDHVWQYSGPWLY) lie on the Lumenal side of the membrane. The chain crosses the membrane as a helical span at residues 23–43 (CLIGIYISLPVLAYHILPWIF). Topologically, residues 44–103 (HKNRSNKRKTISIFVLGDLGHSPRMCYHASSFSKLDYYVNLCGYVETEPSHQIVDDVNID) are cytoplasmic. Positions 104-124 (IIPIEAIKNTNNLPYIMFAIL) form an intramembrane region, helical. Topologically, residues 125 to 456 (KVVRQCGKIW…TFSSIFENKS (332 aa)) are cytoplasmic.

It belongs to the glycosyltransferase group 1 family.

Its subcellular location is the endoplasmic reticulum membrane. It catalyses the reaction an N,N'-diacetylchitobiosyl-diphospho-di-trans,poly-cis-dolichol + GDP-alpha-D-mannose = a beta-D-Man-(1-&gt;4)-beta-D-GlcNAc-(1-&gt;4)-alpha-D-GlcNAc-diphospho-di-trans,poly-cis-dolichol + GDP + H(+). Its pathway is protein modification; protein glycosylation. In terms of biological role, participates in the formation of the lipid-linked precursor oligosaccharide for N-glycosylation. Involved in assembling the dolichol-pyrophosphate-GlcNAc(2)-Man(5) intermediate on the cytoplasmic surface of the ER. In Candida albicans (strain SC5314 / ATCC MYA-2876) (Yeast), this protein is Chitobiosyldiphosphodolichol beta-mannosyltransferase (ALG1).